Consider the following 216-residue polypeptide: Uracil phosphoribosyltransferase (216 aa).

30–34 (KTLVR) serves as a coordination point for GTP. Residues R80, R105, and 140–148 (DPMIATAST) each bind 5-phospho-alpha-D-ribose 1-diphosphate. Uracil-binding positions include I203 and 208–210 (GDA). 5-phospho-alpha-D-ribose 1-diphosphate is bound at residue D209.

This sequence belongs to the UPRTase family. It depends on Mg(2+) as a cofactor.

It carries out the reaction UMP + diphosphate = 5-phospho-alpha-D-ribose 1-diphosphate + uracil. Its pathway is pyrimidine metabolism; UMP biosynthesis via salvage pathway; UMP from uracil: step 1/1. Allosterically activated by GTP. Functionally, catalyzes the conversion of uracil and 5-phospho-alpha-D-ribose 1-diphosphate (PRPP) to UMP and diphosphate. The sequence is that of Uracil phosphoribosyltransferase from Sulfurisphaera tokodaii (strain DSM 16993 / JCM 10545 / NBRC 100140 / 7) (Sulfolobus tokodaii).